The sequence spans 523 residues: Cytoplasmic dynein 1 light intermediate chain 1 (523 aa).

Residues 1–25 (MAAVGRVGSFGSSPPGLASTYASGP) form a disordered region. 74–81 (GEDGAGKT) provides a ligand contact to ATP. Disordered stretches follow at residues 200–219 (PGEDFPASPQRRTTGAQEDR), 387–434 (PPTA…DPNM), and 457–523 (GSPG…GEAS). S207 is subject to Phosphoserine. A Phosphothreonine modification is found at T213. 2 positions are modified to phosphoserine: S398 and S405. T408 is subject to Phosphothreonine. A phosphoserine mark is found at S412, S419, S421, and S427. Residues 412-421 (SVSSNVASVS) are compositionally biased toward low complexity. Over residues 458 to 473 (SPGGPGVGGSPGGGAA) the composition is skewed to gly residues. Positions 474–485 (GASPSLPPSAKK) are enriched in low complexity. 2 positions are modified to phosphoserine: S486 and S510. Residues 506–523 (PASVSPTTPTSPTEGEAS) show a composition bias toward low complexity. Residues T512, T513, and T515 each carry the phosphothreonine modification. At S516 the chain carries Phosphoserine.

Belongs to the dynein light intermediate chain family. Homodimer. The cytoplasmic dynein 1 complex consists of two catalytic heavy chains (HCs) and a number of non-catalytic subunits presented by intermediate chains (ICs), light intermediate chains (LICs) and light chains (LCs); the composition seems to vary in respect to the IC, LIC and LC composition. The heavy chain homodimer serves as a scaffold for the probable homodimeric assembly of the respective non-catalytic subunits. The ICs and LICs bind directly to the HC dimer and the LCs assemble on the IC dimer. Self-associates. Interacts with DYNC1H1; DYNC1LI1 and DYNC1LI2 bind mutually exclusive to DYNC1H1. Interacts with PCNT. Forms a complex with RAB11FIP3 and RAB11A1; the interaction between DYNC1LI1 and RAB11FIP3 is direct and induces DYNC1LI1 localization onto endosomal membrane; the complex regulates endocytic trafficking. Interacts with RUFY3. Phosphorylated during mitosis but not in interphase.

The protein localises to the cytoplasm. It is found in the chromosome. It localises to the centromere. Its subcellular location is the kinetochore. The protein resides in the cytoskeleton. The protein localises to the spindle pole. It is found in the recycling endosome membrane. In terms of biological role, acts as one of several non-catalytic accessory components of the cytoplasmic dynein 1 complex that are thought to be involved in linking dynein to cargos and to adapter proteins that regulate dynein function. Cytoplasmic dynein 1 acts as a motor for the intracellular retrograde motility of vesicles and organelles along microtubules. May play a role in binding dynein to membranous organelles or chromosomes. Probably involved in the microtubule-dependent transport of pericentrin. Is required for progress through the spindle assembly checkpoint. The phosphorylated form appears to be involved in the selective removal of MAD1L1 and MAD1L2 but not BUB1B from kinetochores. Forms a functional Rab11/RAB11FIP3/dynein complex onto endosomal membrane that regulates the movement of peripheral sorting endosomes (SE) along microtubule tracks toward the microtubule organizing center/centrosome, generating the endosomal recycling compartment (ERC). This chain is Cytoplasmic dynein 1 light intermediate chain 1 (Dync1li1), found in Mus musculus (Mouse).